Reading from the N-terminus, the 632-residue chain is MLSQNIIDKIIRQDILVDELLDEELSIFCQTANLAYRSGKPIISNEDYDFIYLATLKNKEPNNPLFKSIEPEGRAFAEEKVLLPELMLSIDKAYSWNEMSKWIERLEKSGMLIGLDLNAIQIKATPKLDGFAGFDDGNRLYTRGDGKKGSDISRVFKRGLCVFKDSGRGLGAGEIVVKKSYFEKYLVHSFEYPRNFQSSLIKEKALDEQAQKAIIDKGALFVPFIKLPIWSGSMTELVAKFEEIVSQVLVMVDFDVDGVVFEVINIDLKTQMGANRKFHRWQIAFKENKDIVQVKVLNVMPQVGRSGKITPVAEVEPTLLSGATIVRVTGHHYGLVKEQGLGIGSVVELTRSGLVIPKIISVLKPMPVDIPDNCLSCGMPLVWESDFLVCVNHKNCPAQIIGRITYFFKVLANNDGFGIATVEKLYAHNIRSVSQIYTLNVERLMAIGFGEKTSINLISQLSRSISEKIEDWRFLAAFGMHRMGLGNCENLLKSYRLNDIFDLTLEQITNIDGFAELTAQVIVQGLVSIVDEYNQIYQYNFNLDTTVFTKDLQTLMHELFDKRIVFTGKMNCPRNEMKKHAKLVGIKVSTTISTKIDYLVIGSRVGQKKIQNAEKLGVVVMTEADYLSKITM.

NAD(+) contacts are provided by residues 45-49 (NEDYD) and 89-90 (SI). The active-site N6-AMP-lysine intermediate is the Lys-127. Positions 143, 174, and 286 each coordinate NAD(+). Positions 374, 377, 390, and 396 each coordinate Zn(2+). A BRCT domain is found at 561–632 (DKRIVFTGKM…EADYLSKITM (72 aa)).

The protein belongs to the NAD-dependent DNA ligase family. LigA subfamily. The cofactor is Mg(2+). It depends on Mn(2+) as a cofactor.

It carries out the reaction NAD(+) + (deoxyribonucleotide)n-3'-hydroxyl + 5'-phospho-(deoxyribonucleotide)m = (deoxyribonucleotide)n+m + AMP + beta-nicotinamide D-nucleotide.. In terms of biological role, DNA ligase that catalyzes the formation of phosphodiester linkages between 5'-phosphoryl and 3'-hydroxyl groups in double-stranded DNA using NAD as a coenzyme and as the energy source for the reaction. It is essential for DNA replication and repair of damaged DNA. The protein is DNA ligase of Vesicomyosocius okutanii subsp. Calyptogena okutanii (strain HA).